The following is a 456-amino-acid chain: Glutamate--tRNA ligase 1 (456 aa).

The 'HIGH' region motif lies at 9–19 (PSPTGQIHIGN). Residues 250-254 (GLSKR) carry the 'KMSKS' region motif. Lysine 253 lines the ATP pocket.

This sequence belongs to the class-I aminoacyl-tRNA synthetase family. Glutamate--tRNA ligase type 1 subfamily. Monomer.

It localises to the cytoplasm. The catalysed reaction is tRNA(Glu) + L-glutamate + ATP = L-glutamyl-tRNA(Glu) + AMP + diphosphate. Catalyzes the attachment of glutamate to tRNA(Glu) in a two-step reaction: glutamate is first activated by ATP to form Glu-AMP and then transferred to the acceptor end of tRNA(Glu). The protein is Glutamate--tRNA ligase 1 of Chelativorans sp. (strain BNC1).